A 127-amino-acid polypeptide reads, in one-letter code: Ribosome-binding factor A (127 aa).

This sequence belongs to the RbfA family. Monomer. Binds 30S ribosomal subunits, but not 50S ribosomal subunits or 70S ribosomes.

The protein localises to the cytoplasm. One of several proteins that assist in the late maturation steps of the functional core of the 30S ribosomal subunit. Associates with free 30S ribosomal subunits (but not with 30S subunits that are part of 70S ribosomes or polysomes). Required for efficient processing of 16S rRNA. May interact with the 5'-terminal helix region of 16S rRNA. The chain is Ribosome-binding factor A from Stenotrophomonas maltophilia (strain K279a).